The following is a 105-amino-acid chain: Malonate decarboxylase acyl carrier protein (105 aa).

Position 28 is an O-(phosphoribosyl dephospho-coenzyme A)serine (Ser-28).

The protein belongs to the MdcC family. Covalently binds the prosthetic group of malonate decarboxylase.

It localises to the cytoplasm. In terms of biological role, subunit of malonate decarboxylase, it is an acyl carrier protein to which acetyl and malonyl thioester residues are bound via a 2'-(5''-phosphoribosyl)-3'-dephospho-CoA prosthetic group and turn over during the catalytic mechanism. The protein is Malonate decarboxylase acyl carrier protein of Bradyrhizobium diazoefficiens (strain JCM 10833 / BCRC 13528 / IAM 13628 / NBRC 14792 / USDA 110).